Here is a 68-residue protein sequence, read N- to C-terminus: ATP synthase F(0) complex subunit 8 (68 aa).

The helical transmembrane segment at 8-24 (TWSITIVSMIITLFIMF) threads the bilayer. K54 is modified (N6-acetyllysine; alternate). K54 is modified (N6-succinyllysine; alternate). An N6-acetyllysine modification is found at K57.

The protein belongs to the ATPase protein 8 family. As to quaternary structure, component of the ATP synthase complex composed at least of ATP5F1A/subunit alpha, ATP5F1B/subunit beta, ATP5MC1/subunit c (homooctomer), MT-ATP6/subunit a, MT-ATP8/subunit 8, ATP5ME/subunit e, ATP5MF/subunit f, ATP5MG/subunit g, ATP5MK/subunit k, ATP5MJ/subunit j, ATP5F1C/subunit gamma, ATP5F1D/subunit delta, ATP5F1E/subunit epsilon, ATP5PF/subunit F6, ATP5PB/subunit b, ATP5PD/subunit d, ATP5PO/subunit OSCP. ATP synthase complex consists of a soluble F(1) head domain (subunits alpha(3) and beta(3)) - the catalytic core - and a membrane F(0) domain - the membrane proton channel (subunits c, a, 8, e, f, g, k and j). These two domains are linked by a central stalk (subunits gamma, delta, and epsilon) rotating inside the F1 region and a stationary peripheral stalk (subunits F6, b, d, and OSCP). Interacts with PRICKLE3.

It localises to the mitochondrion membrane. Functionally, subunit 8, of the mitochondrial membrane ATP synthase complex (F(1)F(0) ATP synthase or Complex V) that produces ATP from ADP in the presence of a proton gradient across the membrane which is generated by electron transport complexes of the respiratory chain. ATP synthase complex consist of a soluble F(1) head domain - the catalytic core - and a membrane F(1) domain - the membrane proton channel. These two domains are linked by a central stalk rotating inside the F(1) region and a stationary peripheral stalk. During catalysis, ATP synthesis in the catalytic domain of F(1) is coupled via a rotary mechanism of the central stalk subunits to proton translocation. In vivo, can only synthesize ATP although its ATP hydrolase activity can be activated artificially in vitro. Part of the complex F(0) domain. The protein is ATP synthase F(0) complex subunit 8 of Ceratotherium simum (White rhinoceros).